The sequence spans 574 residues: Proline--tRNA ligase (574 aa).

It belongs to the class-II aminoacyl-tRNA synthetase family. ProS type 1 subfamily. Homodimer.

The protein localises to the cytoplasm. The catalysed reaction is tRNA(Pro) + L-proline + ATP = L-prolyl-tRNA(Pro) + AMP + diphosphate. Functionally, catalyzes the attachment of proline to tRNA(Pro) in a two-step reaction: proline is first activated by ATP to form Pro-AMP and then transferred to the acceptor end of tRNA(Pro). As ProRS can inadvertently accommodate and process non-cognate amino acids such as alanine and cysteine, to avoid such errors it has two additional distinct editing activities against alanine. One activity is designated as 'pretransfer' editing and involves the tRNA(Pro)-independent hydrolysis of activated Ala-AMP. The other activity is designated 'posttransfer' editing and involves deacylation of mischarged Ala-tRNA(Pro). The misacylated Cys-tRNA(Pro) is not edited by ProRS. The protein is Proline--tRNA ligase of Desulfovibrio desulfuricans (strain ATCC 27774 / DSM 6949 / MB).